We begin with the raw amino-acid sequence, 242 residues long: EF-hand domain-containing protein D2 (242 aa).

A disordered region spans residues 1-53 (MATDELASKLSRRLQMEGEGGGEAPEQPGLNGAAAAAAAAGAPDETAEALGSA). Ala2 bears the N-acetylalanine mark. A Phosphoserine modification is found at Ser11. Low complexity predominate over residues 32–42 (GAAAAAAAAGA). Phosphoserine is present on residues Ser76 and Ser78. Phosphotyrosine is present on Tyr85. EF-hand domains are found at residues 94–129 (KQIK…LGAP) and 130–165 (QTHL…AAAG). Asp107, Asp111, Glu118, Asp143, Asp145, Asp147, Lys149, and Glu154 together coordinate Ca(2+). An N6-acetyllysine modification is found at Lys235.

In terms of assembly, interacts with CASP9; with inactive form.

It is found in the membrane raft. May regulate B-cell receptor (BCR)-induced immature and primary B-cell apoptosis. Plays a role as negative regulator of the canonical NF-kappa-B-activating branch. Controls spontaneous apoptosis through the regulation of BCL2L1 abundance. The polypeptide is EF-hand domain-containing protein D2 (EFHD2) (Bos taurus (Bovine)).